A 300-amino-acid polypeptide reads, in one-letter code: Transacylase cctO (300 aa).

The chain crosses the membrane as a helical span at residues 52–72; sequence IVYVSLTFFVVSIGLNFILAI. 2 short sequence motifs (HXXHC) span residues 185-189 and 225-229; these read HQLGC and HVDQC. Asn-270 carries N-linked (GlcNAc...) asparagine glycosylation.

Belongs to the ustYa family.

It is found in the membrane. The protein operates within mycotoxin biosynthesis. In terms of biological role, transacylase; part of the gene cluster that mediates the biosynthesis of the mycotoxin cyclochlorotine, a hepatotoxic and carcinogenic cyclic chlorinated pentapeptide. Within the pathway, cctO catalyzes the intramolecular O,N-transacylation from isocyclochlorotine to cyclochlorotine. The NRPS cctN initially catalyzes the condensation of L-serine (Ser), Pro, L-2-aminobutyrate (2Abu), Ser, and beta-Phe in this order to produce isocyclotine. After the dichlorination of Pro2 catalyzed by cctP2 to produce isocyclochlorotine, the cctO-mediated transacylation of isocyclochlorotine can furnish cyclochlorotine. The subsequent hydroxylation of cyclochlorotine by cctR yields hydroxycyclochlorotine as the final product. CctP1 probably acts as a phenylalanine aminomutase and provides the uncommon building block beta-Phe. Furthermore, 2Abu can be synthesized from threonine by one of the threonine dehydratases and transaminases localized outside of the cluster. The functions of the remaining proteins encoded by the cluster, cctM and cctT, have not been identified yet. This chain is Transacylase cctO, found in Talaromyces islandicus (Penicillium islandicum).